Consider the following 281-residue polypeptide: MSEHLLLAPLLESYFRRRLTKQRNATPATMASYRDALRMLILFAATRLRKKPAALVLEELDRDLILAFLDELEEKRNNTIATRNARLAAIRSFFHHVAAADPASFGVAQRVLTIPIKRAHIEVTHHLTKAEVDALIEAPNPRTPRGRRDRTFLLFLARTGARVSEATGVNANDLQLERSHPQVLLRGKGRRDRVIPIPQDLARALTALLAEHGIANHEPRPIFVGARNERLTRFGATHIVRRAVAQAVTIRPTLAQKPISPHIFRHYLPHPTMSGTENASV.

The region spanning 5–98 (LLLAPLLESY…AIRSFFHHVA (94 aa)) is the Core-binding (CB) domain. The region spanning 122-281 (EVTHHLTKAE…TMSGTENASV (160 aa)) is the Tyr recombinase domain. Catalysis depends on residues Arg162, Lys188, His262, and Arg265.

This sequence belongs to the 'phage' integrase family.

Seems to be non-functional. This Sinorhizobium fredii (strain NBRC 101917 / NGR234) protein is Putative integrase/recombinase y4rD.